Consider the following 377-residue polypeptide: Probable riboflavin import permease protein RfuC (377 aa).

A run of 10 helical transmembrane segments spans residues Val4 to Leu24, Ala49 to Lys69, Met72 to Leu92, Val98 to Leu118, Ile135 to Val155, Phe182 to Phe202, Phe223 to Leu245, Phe249 to Tyr268, Ala274 to Met294, and Leu303 to Ile323.

This sequence belongs to the binding-protein-dependent transport system permease family. In terms of assembly, the complex is probably composed of two ATP-binding proteins (RfuB), two transmembrane proteins (RfuC and RfuD) and a solute-binding protein (RfuA).

It localises to the cell inner membrane. Functionally, probably part of the ABC transporter complex RfuABCD involved in riboflavin import. Probably responsible for the translocation of the substrate across the membrane. The chain is Probable riboflavin import permease protein RfuC from Treponema pallidum (strain Nichols).